Consider the following 256-residue polypeptide: Small ribosomal subunit protein uS2 (256 aa).

The protein belongs to the universal ribosomal protein uS2 family.

The protein is Small ribosomal subunit protein uS2 of Brucella anthropi (strain ATCC 49188 / DSM 6882 / CCUG 24695 / JCM 21032 / LMG 3331 / NBRC 15819 / NCTC 12168 / Alc 37) (Ochrobactrum anthropi).